The following is a 208-amino-acid chain: Outer-membrane lipoprotein carrier protein (208 aa).

A signal peptide spans 1 to 24; it reads MRMNIVQKILSATCFALLPLLAHA.

Belongs to the LolA family. In terms of assembly, monomer.

Its subcellular location is the periplasm. Participates in the translocation of lipoproteins from the inner membrane to the outer membrane. Only forms a complex with a lipoprotein if the residue after the N-terminal Cys is not an aspartate (The Asp acts as a targeting signal to indicate that the lipoprotein should stay in the inner membrane). The polypeptide is Outer-membrane lipoprotein carrier protein (Dechloromonas aromatica (strain RCB)).